We begin with the raw amino-acid sequence, 1117 residues long: Zinc finger E-box-binding homeobox 1 (1117 aa).

Disordered regions lie at residues 1–103 (MADG…QNHD) and 122–143 (APEE…NGTP). The segment covering 15–30 (PRRNNVTNYNTVVEAN) has biased composition (low complexity). Residues Ser31 and Ser33 each carry the phosphoserine modification. Residues 150 to 173 (LTCPYCDRGYKRFTSLKEHIKYRH) form a C2H2-type 1 zinc finger. Residues Lys166 and Lys175 each participate in a glycyl lysine isopeptide (Lys-Gly) (interchain with G-Cter in SUMO2) cross-link. 2 C2H2-type zinc fingers span residues 180 to 202 (FSCS…MTSH) and 220 to 242 (FKCT…LRIH). The C2H2-type 4; atypical zinc-finger motif lies at 248–272 (YECPNCKKRFSHSGSYSSHISSKKC). The disordered stretch occupies residues 278-307 (VNGRPRSGLKTSQCSSPSLSTSPGSPTRPQ). Lys287 is covalently cross-linked (Glycyl lysine isopeptide (Lys-Gly) (interchain with G-Cter in SUMO2)). Positions 288-304 (TSQCSSPSLSTSPGSPT) are enriched in low complexity. Phosphoserine occurs at positions 293 and 302. Residues Lys311 and Lys315 each participate in a glycyl lysine isopeptide (Lys-Gly) (interchain with G-Cter in SUMO2) cross-link. Lys327 participates in a covalent cross-link: Glycyl lysine isopeptide (Lys-Gly) (interchain with G-Cter in SUMO); alternate. Lys327 is covalently cross-linked (Glycyl lysine isopeptide (Lys-Gly) (interchain with G-Cter in SUMO2); alternate). Glycyl lysine isopeptide (Lys-Gly) (interchain with G-Cter in SUMO2) cross-links involve residues Lys419, Lys473, Lys484, Lys495, and Lys528. Disordered stretches follow at residues 476-501 (IPAP…TDKS), 528-566 (KHYD…SQPP), and 613-687 (GQIP…SPLN). Residues 484-501 (KSEKLPEDLTVKSETDKS) show a composition bias toward basic and acidic residues. A DNA-binding region (homeobox; atypical) is located at residues 559-618 (DLSPSQPPLKNLLSLLKAYYALNAQPSTEELSKIADSVNLPLDGVKKWFEKMQAGQIPGQ). A phosphoserine mark is found at Ser657, Ser664, Ser671, and Ser678. The segment covering 673–687 (MNGSRSCTSSPSPLN) has biased composition (polar residues). Thr680 carries the post-translational modification Phosphothreonine. Ser682 carries the post-translational modification Phosphoserine. A Glycyl lysine isopeptide (Lys-Gly) (interchain with G-Cter in SUMO); alternate cross-link involves residue Lys752. A Glycyl lysine isopeptide (Lys-Gly) (interchain with G-Cter in SUMO2); alternate cross-link involves residue Lys752. The segment at 834 to 876 (PPVKVIQPNGNQDERQDTSSEGVSTVEDQNDSDSTPPKKKTRK) is disordered. Residues 852-868 (SSEGVSTVEDQNDSDST) show a composition bias toward polar residues. C2H2-type zinc fingers lie at residues 882–904 (YACD…KYEH) and 910–932 (HECG…MRLH). The C2H2-type 7; atypical zinc-finger motif lies at 938–959 (YQCDKCGKRFSHSGSYSQHMNH). The disordered stretch occupies residues 991–1117 (EHVGARASPS…QLSEEKTNEA (127 aa)). Composition is skewed to acidic residues over residues 1013-1032 (EEDE…MEEL), 1042-1069 (QGEE…DEAE), and 1098-1109 (SEMESESESEQL).

Belongs to the delta-EF1/ZFH-1 C2H2-type zinc-finger family. In terms of assembly, interacts (via N-terminus) with SMARCA4/BRG1. Post-translationally, ubiquitinated, leading to degradation in a proteasome-dependent manner. Deubiquitinated by USP51, leading to stabilization. Expressed in the external germinal layer (EGL) and internal granular layer (IGL) of the cerebellum (at protein level).

It localises to the nucleus. Acts as a transcriptional repressor. Binds to E-box sequences in the immunoglobulin heavy chain enhancer as well as in the regulatory regions of many other tissue-specific genes. Represses E-cadherin promoter and induces an epithelial-mesenchymal transition (EMT) by recruiting SMARCA4/BRG1. Represses BCL6 transcription in the presence of the corepressor CTBP1. Positively regulates neuronal differentiation. Represses RCOR1 transcription activation during neurogenesis. Represses transcription by binding to the E box (5'-CANNTG-3'). In the absence of TGFB1, acts as a repressor of COL1A2 transcription via binding to the E-box in the upstream enhancer region. Promotes tumorigenicity by repressing stemness-inhibiting microRNAs. The protein is Zinc finger E-box-binding homeobox 1 of Mus musculus (Mouse).